A 149-amino-acid polypeptide reads, in one-letter code: Transcriptional repressor NrdR (149 aa).

The segment at 3 to 34 (CPFCSATDTKVIDSRLVADGHQVRRRRECAEC) is a zinc-finger region. Positions 49-139 (PRVVKQDGSR…VYRAFEDVSE (91 aa)) constitute an ATP-cone domain.

It belongs to the NrdR family. Zn(2+) is required as a cofactor.

Negatively regulates transcription of bacterial ribonucleotide reductase nrd genes and operons by binding to NrdR-boxes. The chain is Transcriptional repressor NrdR from Shewanella sediminis (strain HAW-EB3).